A 159-amino-acid polypeptide reads, in one-letter code: Ribosomal RNA large subunit methyltransferase H (159 aa).

S-adenosyl-L-methionine-binding positions include L76, G108, and 127 to 132 (FGRLTY).

The protein belongs to the RNA methyltransferase RlmH family. In terms of assembly, homodimer.

Its subcellular location is the cytoplasm. It carries out the reaction pseudouridine(1915) in 23S rRNA + S-adenosyl-L-methionine = N(3)-methylpseudouridine(1915) in 23S rRNA + S-adenosyl-L-homocysteine + H(+). Functionally, specifically methylates the pseudouridine at position 1915 (m3Psi1915) in 23S rRNA. This is Ribosomal RNA large subunit methyltransferase H from Enterococcus faecalis (strain ATCC 700802 / V583).